Consider the following 74-residue polypeptide: MARVTVEDCLDQVENRFELVILSSKRARQLSNGAEPTLDWDKDKPTVMALRELAENTINKEVVMSDPDTPPFFG.

It belongs to the RNA polymerase subunit omega family. In terms of assembly, the RNAP catalytic core consists of 2 alpha, 1 beta, 1 beta' and 1 omega subunit. When a sigma factor is associated with the core the holoenzyme is formed, which can initiate transcription.

The enzyme catalyses RNA(n) + a ribonucleoside 5'-triphosphate = RNA(n+1) + diphosphate. Promotes RNA polymerase assembly. Latches the N- and C-terminal regions of the beta' subunit thereby facilitating its interaction with the beta and alpha subunits. In Hydrogenovibrio crunogenus (strain DSM 25203 / XCL-2) (Thiomicrospira crunogena), this protein is DNA-directed RNA polymerase subunit omega.